A 217-amino-acid chain; its full sequence is MTDSEAERAERAAFILSLRRRGIRDLAVLRALELVPRGLFVDPTLRRHAYEDVALPIACGQTMSQPSLVALMTEALALNAEHTVLEIGTGSGYQAAVLSHLAAQVVTMDRYRALVGEAQTRFQVLGLRNVAAFVGDGTQGLPGRAPYDRIMITAATGEVPRALVDQLKPGGVLIAPIGAPREVQKLRRFIKDGGNLEASDLMDVRFVPLVAGVAALL.

Ser-64 is an active-site residue.

The protein belongs to the methyltransferase superfamily. L-isoaspartyl/D-aspartyl protein methyltransferase family.

It localises to the cytoplasm. The enzyme catalyses [protein]-L-isoaspartate + S-adenosyl-L-methionine = [protein]-L-isoaspartate alpha-methyl ester + S-adenosyl-L-homocysteine. In terms of biological role, catalyzes the methyl esterification of L-isoaspartyl residues in peptides and proteins that result from spontaneous decomposition of normal L-aspartyl and L-asparaginyl residues. It plays a role in the repair and/or degradation of damaged proteins. This is Protein-L-isoaspartate O-methyltransferase from Azorhizobium caulinodans (strain ATCC 43989 / DSM 5975 / JCM 20966 / LMG 6465 / NBRC 14845 / NCIMB 13405 / ORS 571).